The chain runs to 500 residues: L-arabinose isomerase (500 aa).

The Mn(2+) site is built by glutamate 306, glutamate 333, histidine 350, and histidine 450.

It belongs to the arabinose isomerase family. Homohexamer. Requires Mn(2+) as cofactor.

The enzyme catalyses beta-L-arabinopyranose = L-ribulose. Its pathway is carbohydrate degradation; L-arabinose degradation via L-ribulose; D-xylulose 5-phosphate from L-arabinose (bacterial route): step 1/3. Functionally, catalyzes the conversion of L-arabinose to L-ribulose. The polypeptide is L-arabinose isomerase (Shigella dysenteriae serotype 1 (strain Sd197)).